The primary structure comprises 256 residues: Imidazole glycerol phosphate synthase subunit HisF (256 aa).

Residues Asp-11 and Asp-130 contribute to the active site.

Belongs to the HisA/HisF family. In terms of assembly, heterodimer of HisH and HisF.

It is found in the cytoplasm. The enzyme catalyses 5-[(5-phospho-1-deoxy-D-ribulos-1-ylimino)methylamino]-1-(5-phospho-beta-D-ribosyl)imidazole-4-carboxamide + L-glutamine = D-erythro-1-(imidazol-4-yl)glycerol 3-phosphate + 5-amino-1-(5-phospho-beta-D-ribosyl)imidazole-4-carboxamide + L-glutamate + H(+). The protein operates within amino-acid biosynthesis; L-histidine biosynthesis; L-histidine from 5-phospho-alpha-D-ribose 1-diphosphate: step 5/9. In terms of biological role, IGPS catalyzes the conversion of PRFAR and glutamine to IGP, AICAR and glutamate. The HisF subunit catalyzes the cyclization activity that produces IGP and AICAR from PRFAR using the ammonia provided by the HisH subunit. The protein is Imidazole glycerol phosphate synthase subunit HisF of Prochlorococcus marinus (strain MIT 9215).